Reading from the N-terminus, the 308-residue chain is Ribosomal RNA small subunit methyltransferase A (308 aa).

S-adenosyl-L-methionine-binding residues include asparagine 35, valine 37, glycine 62, glutamate 83, aspartate 113, and asparagine 136.

This sequence belongs to the class I-like SAM-binding methyltransferase superfamily. rRNA adenine N(6)-methyltransferase family. RsmA subfamily.

The protein resides in the cytoplasm. It catalyses the reaction adenosine(1518)/adenosine(1519) in 16S rRNA + 4 S-adenosyl-L-methionine = N(6)-dimethyladenosine(1518)/N(6)-dimethyladenosine(1519) in 16S rRNA + 4 S-adenosyl-L-homocysteine + 4 H(+). Functionally, specifically dimethylates two adjacent adenosines (A1518 and A1519) in the loop of a conserved hairpin near the 3'-end of 16S rRNA in the 30S particle. May play a critical role in biogenesis of 30S subunits. The protein is Ribosomal RNA small subunit methyltransferase A of Bifidobacterium longum (strain NCC 2705).